Here is a 24-residue protein sequence, read N- to C-terminus: Small ribosomal subunit protein uS19 (24 aa).

Residues 1–24 (KLGEFSPTRTYRGHNKKDKKMQKK) form a disordered region. Positions 11–24 (YRGHNKKDKKMQKK) are enriched in basic residues.

It belongs to the universal ribosomal protein uS19 family.

Protein S19 forms a complex with S13 that binds strongly to the 16S ribosomal RNA. This is Small ribosomal subunit protein uS19 from Phytoplasma sp. (strain STRAWB2).